The sequence spans 441 residues: Tol-Pal system protein TolB (441 aa).

A signal peptide spans 1 to 39 (MPAMTPAFRRADLTGFLRTYGAALILLLAAMLAWQPAQA).

Belongs to the TolB family. The Tol-Pal system is composed of five core proteins: the inner membrane proteins TolA, TolQ and TolR, the periplasmic protein TolB and the outer membrane protein Pal. They form a network linking the inner and outer membranes and the peptidoglycan layer.

It is found in the periplasm. Part of the Tol-Pal system, which plays a role in outer membrane invagination during cell division and is important for maintaining outer membrane integrity. The polypeptide is Tol-Pal system protein TolB (Bordetella parapertussis (strain 12822 / ATCC BAA-587 / NCTC 13253)).